Here is a 44-residue protein sequence, read N- to C-terminus: Photosystem I reaction center subunit IX (44 aa).

A helical transmembrane segment spans residues Tyr7–Ile27.

It belongs to the PsaJ family.

Its subcellular location is the plastid. The protein resides in the chloroplast thylakoid membrane. May help in the organization of the PsaE and PsaF subunits. The sequence is that of Photosystem I reaction center subunit IX from Cucumis sativus (Cucumber).